The chain runs to 241 residues: Uridylate kinase (241 aa).

ATP is bound by residues 10 to 13 (KLSG), G53, and R57. Residues D72 and 133 to 140 (AGSPYFST) contribute to the UMP site. 3 residues coordinate ATP: N161, Y167, and D170.

The protein belongs to the UMP kinase family. In terms of assembly, homohexamer.

The protein localises to the cytoplasm. The enzyme catalyses UMP + ATP = UDP + ADP. Its pathway is pyrimidine metabolism; CTP biosynthesis via de novo pathway; UDP from UMP (UMPK route): step 1/1. With respect to regulation, inhibited by UTP. Catalyzes the reversible phosphorylation of UMP to UDP. The protein is Uridylate kinase of Aster yellows witches'-broom phytoplasma (strain AYWB).